Reading from the N-terminus, the 82-residue chain is MPLFKFAIDVQYRSNVRDPRGETIERVLREEKGLPVKKLRLGKSIHLEVEAENKEKAYEIVKKACEELLVNPVVEEYEVREL.

It belongs to the PurS family. Homodimer. Part of the FGAM synthase complex composed of 1 PurL, 1 PurQ and 2 PurS subunits.

It localises to the cytoplasm. The catalysed reaction is N(2)-formyl-N(1)-(5-phospho-beta-D-ribosyl)glycinamide + L-glutamine + ATP + H2O = 2-formamido-N(1)-(5-O-phospho-beta-D-ribosyl)acetamidine + L-glutamate + ADP + phosphate + H(+). Its pathway is purine metabolism; IMP biosynthesis via de novo pathway; 5-amino-1-(5-phospho-D-ribosyl)imidazole from N(2)-formyl-N(1)-(5-phospho-D-ribosyl)glycinamide: step 1/2. In terms of biological role, part of the phosphoribosylformylglycinamidine synthase complex involved in the purines biosynthetic pathway. Catalyzes the ATP-dependent conversion of formylglycinamide ribonucleotide (FGAR) and glutamine to yield formylglycinamidine ribonucleotide (FGAM) and glutamate. The FGAM synthase complex is composed of three subunits. PurQ produces an ammonia molecule by converting glutamine to glutamate. PurL transfers the ammonia molecule to FGAR to form FGAM in an ATP-dependent manner. PurS interacts with PurQ and PurL and is thought to assist in the transfer of the ammonia molecule from PurQ to PurL. This is Phosphoribosylformylglycinamidine synthase subunit PurS from Thermotoga maritima (strain ATCC 43589 / DSM 3109 / JCM 10099 / NBRC 100826 / MSB8).